The sequence spans 280 residues: Cell division control protein 2 homolog B (280 aa).

ATP contacts are provided by residues 1-5 and K20; that span reads AYGVV. A Protein kinase domain is found at 1–274; the sequence is AYGVVYKARD…AKKALEHEYF (274 aa). Y2 bears the Phosphotyrosine mark. Catalysis depends on D114, which acts as the Proton acceptor. Phosphothreonine; by CAK is present on T148.

This sequence belongs to the protein kinase superfamily. CMGC Ser/Thr protein kinase family. CDC2/CDKX subfamily.

It catalyses the reaction L-seryl-[protein] + ATP = O-phospho-L-seryl-[protein] + ADP + H(+). It carries out the reaction L-threonyl-[protein] + ATP = O-phospho-L-threonyl-[protein] + ADP + H(+). The enzyme catalyses [DNA-directed RNA polymerase] + ATP = phospho-[DNA-directed RNA polymerase] + ADP + H(+). Phosphorylation at Tyr-2 inactivates the enzyme, while phosphorylation at Thr-148 activates it. Plays a key role in the control of the eukaryotic cell cycle. The chain is Cell division control protein 2 homolog B (CDC2B) from Antirrhinum majus (Garden snapdragon).